Here is a 362-residue protein sequence, read N- to C-terminus: Chorismate synthase (362 aa).

Arg47 is an NADP(+) binding site. FMN is bound by residues 124 to 126 (RSS), Gly286, 301 to 305 (KPTAT), and Arg327.

This sequence belongs to the chorismate synthase family. Homotetramer. The cofactor is FMNH2.

The enzyme catalyses 5-O-(1-carboxyvinyl)-3-phosphoshikimate = chorismate + phosphate. Its pathway is metabolic intermediate biosynthesis; chorismate biosynthesis; chorismate from D-erythrose 4-phosphate and phosphoenolpyruvate: step 7/7. In terms of biological role, catalyzes the anti-1,4-elimination of the C-3 phosphate and the C-6 proR hydrogen from 5-enolpyruvylshikimate-3-phosphate (EPSP) to yield chorismate, which is the branch point compound that serves as the starting substrate for the three terminal pathways of aromatic amino acid biosynthesis. This reaction introduces a second double bond into the aromatic ring system. The polypeptide is Chorismate synthase (Trichormus variabilis (strain ATCC 29413 / PCC 7937) (Anabaena variabilis)).